A 344-amino-acid polypeptide reads, in one-letter code: Phenylalanine--tRNA ligase alpha subunit (344 aa).

Glutamate 256 contributes to the Mg(2+) binding site.

It belongs to the class-II aminoacyl-tRNA synthetase family. Phe-tRNA synthetase alpha subunit type 1 subfamily. As to quaternary structure, tetramer of two alpha and two beta subunits. It depends on Mg(2+) as a cofactor.

The protein resides in the cytoplasm. The catalysed reaction is tRNA(Phe) + L-phenylalanine + ATP = L-phenylalanyl-tRNA(Phe) + AMP + diphosphate + H(+). The sequence is that of Phenylalanine--tRNA ligase alpha subunit from Bacillus anthracis (strain CDC 684 / NRRL 3495).